A 263-amino-acid chain; its full sequence is Probable septum site-determining protein MinC (263 aa).

Residues 107–159 (LPPSGARERPLDIKDSAPRKPAEEPSPSAGEARPEPAKAEEKPADPVSRPTKV) form a disordered region. Basic and acidic residues-rich tracts occupy residues 112–129 (ARER…KPAE) and 138–150 (ARPE…EKPA).

It belongs to the MinC family. As to quaternary structure, interacts with MinD and FtsZ.

In terms of biological role, cell division inhibitor that blocks the formation of polar Z ring septums. Rapidly oscillates between the poles of the cell to destabilize FtsZ filaments that have formed before they mature into polar Z rings. Prevents FtsZ polymerization. The protein is Probable septum site-determining protein MinC of Pseudomonas aeruginosa (strain UCBPP-PA14).